Here is a 186-residue protein sequence, read N- to C-terminus: dCTP deaminase (186 aa).

107 to 112 is a binding site for dCTP; that stretch reads KSTYAR. The Proton donor/acceptor role is filled by Glu133. The dCTP site is built by Gln152, Tyr166, and Gln176.

It belongs to the dCTP deaminase family. As to quaternary structure, homotrimer.

It carries out the reaction dCTP + H2O + H(+) = dUTP + NH4(+). It participates in pyrimidine metabolism; dUMP biosynthesis; dUMP from dCTP (dUTP route): step 1/2. In terms of biological role, catalyzes the deamination of dCTP to dUTP. This chain is dCTP deaminase, found in Campylobacter jejuni (strain RM1221).